Here is a 148-residue protein sequence, read N- to C-terminus: UPF0756 membrane protein YeaL (148 aa).

The next 4 helical transmembrane spans lie at 14 to 34 (ALGFISHNTTVAVSILVLIIV), 51 to 71 (LSIGIIILTIGVMAPIASGTL), 86 to 106 (LVAIAVGVIVSWLGGRGVTLM), and 121 to 141 (VLGVALFRGVPVGPLIAAGLV).

Belongs to the UPF0756 family.

The protein resides in the cell membrane. This is UPF0756 membrane protein YeaL from Shigella boydii serotype 18 (strain CDC 3083-94 / BS512).